Here is a 2187-residue protein sequence, read N- to C-terminus: Non-reducing polyketide synthase phnA (2187 aa).

Positions 17 to 255 are N-terminal acylcarrier protein transacylase domain (SAT); the sequence is LLFGDLSLAH…KYLDIDSPYH (239 aa). A Ketosynthase family 3 (KS3) domain is found at 383 to 819; sequence HSKIAIVGYS…GGNTAMLIED (437 aa). Catalysis depends on for beta-ketoacyl synthase activity residues Cys555, His690, and His735. The segment at 926–1226 is malonyl-CoA:ACP transacylase (MAT) domain; that stretch reads RVAFAFTGQG…GMVKGTIDSR (301 aa). Ser1021 serves as the catalytic For acyl/malonyl transferase activity. Residues 1321-1637 are product template (PT) domain; that stretch reads PCAQQIVEEF…PRRALDHLLP (317 aa). The tract at residues 1324–1458 is N-terminal hotdog fold; it reads QQIVEEFHDS…LDVVLYPGQQ (135 aa). The region spanning 1324 to 1633 is the PKS/mFAS DH domain; it reads QQIVEEFHDS…FQGVPRRALD (310 aa). The active-site Proton acceptor; for dehydratase activity is the His1356. The segment at 1486-1633 is C-terminal hotdog fold; that stretch reads TETHLIKRGM…FQGVPRRALD (148 aa). The active-site Proton donor; for dehydratase activity is the Asp1546. Residues 1652–1669 show a composition bias toward low complexity; the sequence is KAPVAAVAPPRTPTKAAP. A disordered region spans residues 1652–1681; sequence KAPVAAVAPPRTPTKAAPQSRQAAPKQKRS. 2 consecutive Carrier domains span residues 1684 to 1758 and 1796 to 1874; these read SDVF…SNSD and SSES…YNVM. An O-(pantetheine 4'-phosphoryl)serine modification is found at Ser1718. The segment at 1754-1796 is disordered; that stretch reads LSNSDEDDTPSGDSSTYEDSESQITSPASSVGPETPGGGEFGS. A compositionally biased stretch (acidic residues) spans 1757–1774; that stretch reads SDEDDTPSGDSSTYEDSE. Residue Ser1834 is modified to O-(pantetheine 4'-phosphoryl)serine. Residues 1906 to 2183 are thioesterase (TE) domain; it reads SSLPQATSIL…PEMGEAVAEF (278 aa). Ser2009 functions as the For thioesterase activity in the catalytic mechanism.

It catalyses the reaction 6 malonyl-CoA + acetyl-CoA + 5 H(+) = 3,6,7,9-tetrahydroxy-3-methyl-2,3-dihydro-1H-naphtho[2,1-b]pyran-1-one + 6 CO2 + 7 CoA + H2O. Its pathway is secondary metabolite biosynthesis. Functionally, non-reducing polyketide synthase; part of the gene cluster that mediates the biosynthesis of phenalenones such as herqueinone, compounds that have been reported to treat tumors, bacterial infections and/or mycoses, and rheumatic diseases. The non-reducing polyketide synthase phnA synthesizes the heptaketide backbone and cyclizes it into the angular, hemiketal-containing naphtho-gamma-pyrone prephenalenone. The product template (PT) domain of phnA catalyzes only the C4-C9 aldol condensation, which is unprecedented among known PT domains. The transformation of prephenalenone to phenalenones requires an FAD-dependent monooxygenase phnB, which catalyzes the C2 aromatic hydroxylation of prephenalenone and ring opening of the gamma-pyrone ring simultaneously. Subsequent intramolecular deprotonation of C3 phenolic oxygen accelerates phenalenone ring closure to yield the tricyclic phenalenone core with a C2 hydroxylation. The prenyltransferase phnF further catalyzes reverse C-prenylation of phenalenone by direct electrophilic substitution at C6, or possibly via first a forward O-prenylation of a neighboring phenol in phenalenone, followed by a Claisen rearrangement. The hydroalkoxylation enzyme phnH catalyzes the 5-exo-trig cyclization via acid catalysis after the spontaneous deprotonation of 7-OH, which leads to the formation of the dihydrobenzofuran atrovenetin. Atrovenetin is further converted to deoxyherqueinone by the O-methyltransferase phnC which can methylate C2-OH to stabilize the northern portion of the phenalenone core. Finally, the oxidoreductase phnG converts deoxyherqueinone to herqueinone via C6 hydroxylation. This is Non-reducing polyketide synthase phnA from Penicillium herquei.